The following is a 132-amino-acid chain: Major pollen allergen Art v 1 (132 aa).

The signal sequence occupies residues 1–24 (MAKCSYVFCAVLLIFIVAIGEMEA). The segment at 28–77 (KLCEKTSKTYSGKCDNKKCDKKCIEWEKAQHGACHKREAGKESCFCYFDC) is defensin-like domain. Intrachain disulfides connect Cys-30–Cys-77, Cys-41–Cys-61, Cys-46–Cys-71, and Cys-50–Cys-73. 2 epitope recognized by IgE antibodies of mugwort pollen-sensitized patients regions span residues 64–70 (REAGKES) and 79–87 (KSPPGATPA). Residues 81–132 (PPGATPAPPGAAPPPAAGGSPSPPADGGSPPPPADGGSPPVDGGSPPPPSTH) form a disordered region. The segment covering 83–114 (GATPAPPGAAPPPAAGGSPSPPADGGSPPPPA) has biased composition (pro residues). Over residues 115–124 (DGGSPPVDGG) the composition is skewed to low complexity.

In the N-terminal section; belongs to the DEFL family. The mature protein extracted from the plant exhibits an average rate of 76% of hydroxyprolines. In terms of processing, O-glycosylated. O-linkage of 3 galactoses plus 9-16 or 21-23 arabinose residues attached on one or two hydroxyprolines.

It is found in the secreted. This is Major pollen allergen Art v 1 from Artemisia vulgaris (Mugwort).